The sequence spans 607 residues: NADH-ubiquinone oxidoreductase chain 5 (607 aa).

Helical transmembrane passes span Ile-3–Met-23, Tyr-35–Phe-55, Phe-84–Ser-104, Phe-117–Met-137, Leu-140–Gly-160, Ala-171–Leu-191, Leu-210–His-230, Thr-241–Val-261, Phe-272–Ala-292, Ile-301–Asn-320, Leu-324–Gly-344, Ile-365–Phe-385, Asn-405–Ile-427, Leu-457–Ile-477, Met-482–Leu-502, and Leu-586–Leu-606.

The protein belongs to the complex I subunit 5 family. Core subunit of respiratory chain NADH dehydrogenase (Complex I) which is composed of 45 different subunits.

The protein resides in the mitochondrion inner membrane. It catalyses the reaction a ubiquinone + NADH + 5 H(+)(in) = a ubiquinol + NAD(+) + 4 H(+)(out). Functionally, core subunit of the mitochondrial membrane respiratory chain NADH dehydrogenase (Complex I) which catalyzes electron transfer from NADH through the respiratory chain, using ubiquinone as an electron acceptor. Essential for the catalytic activity and assembly of complex I. This Mus musculus (Mouse) protein is NADH-ubiquinone oxidoreductase chain 5 (Mtnd5).